The sequence spans 62 residues: Potassium channel toxin alpha-KTx Tx773 (62 aa).

Residues 1 to 18 form the signal peptide; that stretch reads MQKLFIVLLLFCILRLDA. Cystine bridges form between C28-C46, C33-C59, and C37-C61.

Belongs to the short scorpion toxin superfamily. Potassium channel inhibitor family. Alpha-KTx 23 subfamily. Expressed by the venom gland.

Its subcellular location is the secreted. Functionally, may block potassium channels. The sequence is that of Potassium channel toxin alpha-KTx Tx773 from Buthus israelis (Israeli scorpion).